Consider the following 410-residue polypeptide: Dual-specificity RNA methyltransferase RlmN (410 aa).

Residue Glu123 is the Proton acceptor of the active site. The Radical SAM core domain maps to 129–378; the sequence is EEGRGTLCIS…IRTPRGRDIL (250 aa). Cys136 and Cys381 are disulfide-bonded. [4Fe-4S] cluster is bound by residues Cys143, Cys147, and Cys150. S-adenosyl-L-methionine is bound by residues 207-208, Ser239, 261-263, and Asn338; these read GE and SLH. The active-site S-methylcysteine intermediate is Cys381.

It belongs to the radical SAM superfamily. RlmN family. It depends on [4Fe-4S] cluster as a cofactor.

The protein localises to the cytoplasm. It catalyses the reaction adenosine(2503) in 23S rRNA + 2 reduced [2Fe-2S]-[ferredoxin] + 2 S-adenosyl-L-methionine = 2-methyladenosine(2503) in 23S rRNA + 5'-deoxyadenosine + L-methionine + 2 oxidized [2Fe-2S]-[ferredoxin] + S-adenosyl-L-homocysteine. The enzyme catalyses adenosine(37) in tRNA + 2 reduced [2Fe-2S]-[ferredoxin] + 2 S-adenosyl-L-methionine = 2-methyladenosine(37) in tRNA + 5'-deoxyadenosine + L-methionine + 2 oxidized [2Fe-2S]-[ferredoxin] + S-adenosyl-L-homocysteine. Functionally, specifically methylates position 2 of adenine 2503 in 23S rRNA and position 2 of adenine 37 in tRNAs. m2A2503 modification seems to play a crucial role in the proofreading step occurring at the peptidyl transferase center and thus would serve to optimize ribosomal fidelity. In Mesorhizobium japonicum (strain LMG 29417 / CECT 9101 / MAFF 303099) (Mesorhizobium loti (strain MAFF 303099)), this protein is Dual-specificity RNA methyltransferase RlmN.